The following is a 358-amino-acid chain: Histidinol-phosphate aminotransferase (358 aa).

Residue Lys-218 is modified to N6-(pyridoxal phosphate)lysine.

This sequence belongs to the class-II pyridoxal-phosphate-dependent aminotransferase family. Histidinol-phosphate aminotransferase subfamily. Homodimer. Pyridoxal 5'-phosphate serves as cofactor.

It catalyses the reaction L-histidinol phosphate + 2-oxoglutarate = 3-(imidazol-4-yl)-2-oxopropyl phosphate + L-glutamate. It functions in the pathway amino-acid biosynthesis; L-histidine biosynthesis; L-histidine from 5-phospho-alpha-D-ribose 1-diphosphate: step 7/9. The polypeptide is Histidinol-phosphate aminotransferase (Dehalococcoides mccartyi (strain CBDB1)).